A 191-amino-acid chain; its full sequence is Negative modulator of initiation of replication (191 aa).

Residues 96-97 (AV) are interaction with DNA.

This sequence belongs to the SeqA family. In terms of assembly, homodimer. Polymerizes to form helical filaments.

It is found in the cytoplasm. In terms of biological role, negative regulator of replication initiation, which contributes to regulation of DNA replication and ensures that replication initiation occurs exactly once per chromosome per cell cycle. Binds to pairs of hemimethylated GATC sequences in the oriC region, thus preventing assembly of replication proteins and re-initiation at newly replicated origins. Repression is relieved when the region becomes fully methylated. The protein is Negative modulator of initiation of replication of Shewanella amazonensis (strain ATCC BAA-1098 / SB2B).